Reading from the N-terminus, the 443-residue chain is Thymidine phosphorylase (443 aa).

This sequence belongs to the thymidine/pyrimidine-nucleoside phosphorylase family. In terms of assembly, homodimer.

It carries out the reaction thymidine + phosphate = 2-deoxy-alpha-D-ribose 1-phosphate + thymine. The protein operates within pyrimidine metabolism; dTMP biosynthesis via salvage pathway; dTMP from thymine: step 1/2. In terms of biological role, the enzymes which catalyze the reversible phosphorolysis of pyrimidine nucleosides are involved in the degradation of these compounds and in their utilization as carbon and energy sources, or in the rescue of pyrimidine bases for nucleotide synthesis. The sequence is that of Thymidine phosphorylase from Shewanella sp. (strain ANA-3).